Consider the following 429-residue polypeptide: SET domain-containing protein 14 (429 aa).

The Zn(2+) site is built by Cys26, Cys29, Cys39, Cys42, Cys48, Cys52, His60, and Cys64. The MYND-type zinc-finger motif lies at 26–64 (CNQCLTSMAELKKCSACRRLAYCSQECQRADWKLHKVEC).

The protein resides in the nucleus. The polypeptide is SET domain-containing protein 14 (set-14) (Caenorhabditis elegans).